Consider the following 142-residue polypeptide: Alpha-lactalbumin (142 aa).

An N-terminal signal peptide occupies residues 1–19; sequence MMSFVSLLLVGILFHATQA. In terms of domain architecture, C-type lysozyme spans 20–142; sequence EQLTKCEVFQ…KLDQWLCEKL (123 aa). Disulfide bonds link Cys-25/Cys-139, Cys-47/Cys-130, Cys-80/Cys-96, and Cys-92/Cys-110. Asn-64 and Asn-93 each carry an N-linked (GlcNAc...) asparagine glycan. Ca(2+) contacts are provided by Lys-98, Asp-101, Asp-103, Asp-106, and Asp-107.

This sequence belongs to the glycosyl hydrolase 22 family. Lactose synthase (LS) is a heterodimer of a catalytic component, beta1,4-galactosyltransferase (beta4Gal-T1) and a regulatory component, alpha-lactalbumin (LA). Mammary gland specific. Secreted in milk.

It localises to the secreted. Functionally, regulatory subunit of lactose synthase, changes the substrate specificity of galactosyltransferase in the mammary gland making glucose a good acceptor substrate for this enzyme. This enables LS to synthesize lactose, the major carbohydrate component of milk. In other tissues, galactosyltransferase transfers galactose onto the N-acetylglucosamine of the oligosaccharide chains in glycoproteins. The chain is Alpha-lactalbumin (LALBA) from Capra hircus (Goat).